A 200-amino-acid polypeptide reads, in one-letter code: Imidazoleglycerol-phosphate dehydratase (200 aa).

Belongs to the imidazoleglycerol-phosphate dehydratase family.

It is found in the cytoplasm. The enzyme catalyses D-erythro-1-(imidazol-4-yl)glycerol 3-phosphate = 3-(imidazol-4-yl)-2-oxopropyl phosphate + H2O. Its pathway is amino-acid biosynthesis; L-histidine biosynthesis; L-histidine from 5-phospho-alpha-D-ribose 1-diphosphate: step 6/9. The polypeptide is Imidazoleglycerol-phosphate dehydratase (Leifsonia xyli subsp. xyli (strain CTCB07)).